A 429-amino-acid chain; its full sequence is Serine hydroxymethyltransferase (429 aa).

Residues leucine 126 and 130-132 (GHL) each bind (6S)-5,6,7,8-tetrahydrofolate. Lysine 235 is subject to N6-(pyridoxal phosphate)lysine. 359 to 361 (SPF) contacts (6S)-5,6,7,8-tetrahydrofolate.

This sequence belongs to the SHMT family. In terms of assembly, homodimer. The cofactor is pyridoxal 5'-phosphate.

It localises to the cytoplasm. It catalyses the reaction (6R)-5,10-methylene-5,6,7,8-tetrahydrofolate + glycine + H2O = (6S)-5,6,7,8-tetrahydrofolate + L-serine. Its pathway is one-carbon metabolism; tetrahydrofolate interconversion. It participates in amino-acid biosynthesis; glycine biosynthesis; glycine from L-serine: step 1/1. In terms of biological role, catalyzes the reversible interconversion of serine and glycine with tetrahydrofolate (THF) serving as the one-carbon carrier. This reaction serves as the major source of one-carbon groups required for the biosynthesis of purines, thymidylate, methionine, and other important biomolecules. Also exhibits THF-independent aldolase activity toward beta-hydroxyamino acids, producing glycine and aldehydes, via a retro-aldol mechanism. In Synechococcus sp. (strain CC9311), this protein is Serine hydroxymethyltransferase.